The primary structure comprises 193 residues: 3-isopropylmalate dehydratase small subunit (193 aa).

Belongs to the LeuD family. LeuD type 1 subfamily. In terms of assembly, heterodimer of LeuC and LeuD.

It catalyses the reaction (2R,3S)-3-isopropylmalate = (2S)-2-isopropylmalate. It participates in amino-acid biosynthesis; L-leucine biosynthesis; L-leucine from 3-methyl-2-oxobutanoate: step 2/4. In terms of biological role, catalyzes the isomerization between 2-isopropylmalate and 3-isopropylmalate, via the formation of 2-isopropylmaleate. The polypeptide is 3-isopropylmalate dehydratase small subunit (Listeria monocytogenes serovar 1/2a (strain ATCC BAA-679 / EGD-e)).